The chain runs to 176 residues: Large ribosomal subunit protein uL10 (176 aa).

It belongs to the universal ribosomal protein uL10 family. As to quaternary structure, part of the ribosomal stalk of the 50S ribosomal subunit. The N-terminus interacts with L11 and the large rRNA to form the base of the stalk. The C-terminus forms an elongated spine to which L12 dimers bind in a sequential fashion forming a multimeric L10(L12)X complex.

In terms of biological role, forms part of the ribosomal stalk, playing a central role in the interaction of the ribosome with GTP-bound translation factors. In Streptomyces antibioticus, this protein is Large ribosomal subunit protein uL10 (rplJ).